The primary structure comprises 166 residues: Ribonuclease H (166 aa).

The RNase H type-1 domain maps to 10-151 (KRVRVDMFTD…ADELARRGTS (142 aa)). The Mg(2+) site is built by Asp19, Glu57, Asp79, and Asp143. Basic and acidic residues predominate over residues 145 to 157 (LARRGTSEARQGK). The segment at 145–166 (LARRGTSEARQGKVDGQSSTIL) is disordered.

Belongs to the RNase H family. Monomer. It depends on Mg(2+) as a cofactor.

Its subcellular location is the cytoplasm. The catalysed reaction is Endonucleolytic cleavage to 5'-phosphomonoester.. Its function is as follows. Endonuclease that specifically degrades the RNA of RNA-DNA hybrids. This chain is Ribonuclease H, found in Rhodospirillum rubrum (strain ATCC 11170 / ATH 1.1.1 / DSM 467 / LMG 4362 / NCIMB 8255 / S1).